Reading from the N-terminus, the 150-residue chain is Arginine repressor (150 aa).

The protein belongs to the ArgR family.

The protein localises to the cytoplasm. It participates in amino-acid biosynthesis; L-arginine biosynthesis [regulation]. Functionally, regulates arginine biosynthesis genes. The chain is Arginine repressor from Staphylococcus aureus (strain Mu3 / ATCC 700698).